Consider the following 161-residue polypeptide: Large ribosomal subunit protein uL11 (161 aa).

The protein belongs to the universal ribosomal protein uL11 family. In terms of assembly, part of the ribosomal stalk of the 50S ribosomal subunit. Interacts with L10 and the large rRNA to form the base of the stalk. L10 forms an elongated spine to which L12 dimers bind in a sequential fashion forming a multimeric L10(L12)X complex.

Forms part of the ribosomal stalk which helps the ribosome interact with GTP-bound translation factors. This is Large ribosomal subunit protein uL11 from Methanococcoides burtonii (strain DSM 6242 / NBRC 107633 / OCM 468 / ACE-M).